A 594-amino-acid polypeptide reads, in one-letter code: Arginine--tRNA ligase (594 aa).

The short motif at 139 to 149 is the 'HIGH' region element; sequence ANPTGPLHVGH.

Belongs to the class-I aminoacyl-tRNA synthetase family. As to quaternary structure, monomer.

It is found in the cytoplasm. It catalyses the reaction tRNA(Arg) + L-arginine + ATP = L-arginyl-tRNA(Arg) + AMP + diphosphate. The polypeptide is Arginine--tRNA ligase (Burkholderia thailandensis (strain ATCC 700388 / DSM 13276 / CCUG 48851 / CIP 106301 / E264)).